Here is a 229-residue protein sequence, read N- to C-terminus: uncharacterized protein (229 aa).

This sequence to T.pallidum TP_0315, TP_0618 and TP_0619.

This is an uncharacterized protein from Treponema pallidum (strain Nichols).